We begin with the raw amino-acid sequence, 764 residues long: Transient receptor potential cation channel subfamily V member 2 (764 aa).

The tract at residues 1 to 46 (MTSPSSSPVFRLETLDGGQEDGSEADRGKLDFGSGLPPMESQFQGE) is disordered. The required for interaction with SLC50A1 stretch occupies residues 1-388 (MTSPSSSPVF…LLQAKWDLLI (388 aa)). Over 1-390 (MTSPSSSPVF…QAKWDLLIPK (390 aa)) the chain is Cytoplasmic. Ser-6 carries the phosphoserine modification. 6 ANK repeats span residues 72–114 (NRFD…TEGS), 115–161 (TGKT…DDYY), 162–207 (RGHS…TCFY), 208–243 (FGEL…ATDS), 244–292 (QGNT…IRNL), and 293–319 (QDLT…REFS). Residues 391–411 (FFLNFLCNLIYMFIFTAVAYH) form a helical membrane-spanning segment. At 412–434 (QPTLKKQAAPHLKAEVGNSMLLT) the chain is on the extracellular side. The helical transmembrane segment at 435 to 455 (GHILILLGGIYLLVGQLWYFW) threads the bilayer. At 456–471 (RRHVFIWISFIDSYFE) the chain is on the cytoplasmic side. A helical membrane pass occupies residues 472–492 (ILFLFQALLTVVSQVLCFLAI). Position 493 (Glu-493) is a topological domain, extracellular. A helical transmembrane segment spans residues 494 to 514 (WYLPLLVSALVLGWLNLLYYT). Topologically, residues 515–537 (RGFQHTGIYSVMIQKVILRDLLR) are cytoplasmic. A helical transmembrane segment spans residues 538 to 558 (FLLIYLVFLFGFAVALVSLSQ). Positions 562–585 (RPEAPTGPNATESVQPMEGQEDEG) are disordered. Asn-570 is a glycosylation site (N-linked (GlcNAc...) asparagine). Residues 572–609 (TESVQPMEGQEDEGNGAQYRGILEASLELFKFTIGMGE) constitute an intramembrane region (pore-forming). A helical transmembrane segment spans residues 622–642 (VLLLLLAYVLLTYILLLNMLI). Over 643–764 (ALMSETVNSV…YVPVQLLQSN (122 aa)) the chain is Cytoplasmic. Positions 725-756 (PSGAGVPRTLENPVLASPPKEDEDGASEENYV) are disordered. Phosphoserine is present on residues Ser-751 and Ser-763.

Belongs to the transient receptor (TC 1.A.4) family. TrpV subfamily. TRPV2 sub-subfamily. Homotetramer. Interacts with a cAMP-dependent protein kinase type II regulatory subunit (PRKAR2A or PRKAR2B) and ACBD3. Interacts with SLC50A1; the interaction probably occurs intracellularly and depends on TRPV2 N-glycosylation. N-glycosylated. In terms of processing, phosphorylated by PKA.

It localises to the cell membrane. Its subcellular location is the cytoplasm. It is found in the melanosome. It catalyses the reaction Ca(2+)(in) = Ca(2+)(out). The enzyme catalyses Mg(2+)(in) = Mg(2+)(out). It carries out the reaction Na(+)(in) = Na(+)(out). The catalysed reaction is K(+)(in) = K(+)(out). Calcium-permeable, non-selective cation channel with an outward rectification. Seems to be regulated, at least in part, by IGF1, PDGF and neuropeptide head activator. May transduce physical stimuli in mast cells. Activated by temperatures higher than 52 degrees Celsius; is not activated by vanilloids and acidic pH. The polypeptide is Transient receptor potential cation channel subfamily V member 2 (TRPV2) (Homo sapiens (Human)).